We begin with the raw amino-acid sequence, 1616 residues long: MISARSAEALTAQAGRLMAHVQANPGLDPIDVGCSLASRSVFEHRAVVVGASREQLIAGLAGLAAGEPGAGVAVGQPGSVGKTVVVFPGQGAQRIGMGRELYGELPVFAQAFDAVADELDRHLRLPLRDVIWGADADLLDSTEFAQPALFAVEVASFAVLRDWGVLPDFVMGHSVGELAAAHAAGVLTLADAAMLVVARGRLMQALPAGGAMVAVAASEDEVEPLLGEGVGIAAINAPESVVISGAQAAANAIADRFAAQGRRVHQLAVSHAFHSPLMEPMLEEFARVAARVQAREPQLGLVSNVTGELAGPDFGSAQYWVDHVRRPVRFADSARHLQTLGATHFIEAGPGSGLTGSIEQSLAPAEAMVVSMLGKDRPELASALGAAGQVFTTGVPVQWSAVFAGSGGRRVQLPTYAFQRRRFWETPGADGPADAAGLGLGATEHALLGAVVERPDSDEVVLTGRLSLADQPWLADHVVNGVVLFPGAGFVELVIRAGDEVGCALIEELVLAAPLVMHPGVGVQVQVVVGAADESGHRAVSVYSRGDQSQGWLLNAEGMLGVAAAETPMDLSVWPPEGAESVDISDGYAQLAERGYAYGPAFQGLVAIWRRGSELFAEVVAPGEAGVAVDRMGMHPAVLDAVLHALGLAVEKTQASTETRLPFCWRGVSLHAGGAGRVRARFASAGADAISVDVCDATGLPVLTVRSLVTRPITAEQLRAAVTAAGGASDQGPLEVVWSPISVVSGGANGSAPPAPVSWADFCAGSDGDASVVVWELESAGGQASSVVGSVYAATHTALEVLQSWLGADRAATLVVLTHGGVGLAGEDISDLAAAAVWGMARSAQAENPGRIVLIDTDAAVDASVLAGVGEPQLLVRGGTVHAPRLSPAPALLALPAAESAWRLAAGGGGTLEDLVIQPCPEVQAPLQAGQVRVAVAAVGVNFRDVVAALGMYPGQAPPLGAEGAGVVLETGPEVTDLAVGDAVMGFLGGAGPLAVVDQQLVTRVPQGWSFAQAAAVPVVFLTAWYGLADLAEIKAGESVLIHAGTGGVGMAAVQLARQWGVEVFVTASRGKWDTLRAMGFDDDHIGDSRTCEFEEKFLAVTEGRGVDVVLDSLAGEFVDASLRLLVRGGRFLEMGKTDIRDAQEIAANYPGVQYRAFDLSEAGPARMQEMLAEVRELFDTRELHRLPVTTWDVRCAPAAFRFMSQARHIGKVVLTMPSALADRLADGTVVITGATGAVGGVLARHLVGAYGVRHLVLASRRGDRAEGAAELAADLTEAGAKVQVVACDVADRAAVAGLFAQLSREYPPVRGVIHAAGVLDDAVITSLTPDRIDTVLRAKVDAAWNLHQATSDLDLSMFALCSSIAATVGSPGQGNYSAANAFLDGLAAHRQAAGLAGISLAWGLWEQPGGMTAHLSSRDLARMSRSGLAPMSPAEAVELFDAALAIDHPLAVATLLDRAALDARAQAGALPALFSGLARRPRRRQIDDTGDATSSKSALAQRLHGLAADEQLELLVGLVCLQAAAVLGRPSAEDVDPDTEFGDLGFDSLTAVELRNRLKTATGLTLPPTVIFDHPTPTAVAEYVAQQMSGSRPTESGDPTSQVVEPAAAEVSVHA.

The interval 83–397 is acyltransferase; that stretch reads TVVVFPGQGA…GQVFTTGVPV (315 aa). Ser174 (for acyltransferase activity) is an active-site residue. The tract at residues 445 to 567 is N-terminal hotdog fold; the sequence is HALLGAVVER…GMLGVAAAET (123 aa). Residues 445 to 605 form a dehydratase region; it reads HALLGAVVER…YAYGPAFQGL (161 aa). In terms of domain architecture, PKS/mFAS DH spans 445-719; sequence HALLGAVVER…TRPITAEQLR (275 aa). His477 serves as the catalytic Proton acceptor; for dehydratase activity. Residues 579–719 are C-terminal hotdog fold; that stretch reads AESVDISDGY…TRPITAEQLR (141 aa). Asp640 (proton donor; for dehydratase activity) is an active-site residue. The enoylreductase stretch occupies residues 910–1215; sequence GTLEDLVIQP…QARHIGKVVL (306 aa). Residues 1040–1057 and 1229–1244 contribute to the NADP(+) site; these read VLIH…VQLA and TVVI…GVLA. A beta-ketoacyl reductase region spans residues 1228–1409; sequence GTVVITGATG…SLAWGLWEQP (182 aa). Positions 1514–1589 constitute a Carrier domain; that stretch reads ELLVGLVCLQ…AVAEYVAQQM (76 aa). Residue Ser1549 is modified to O-(pantetheine 4'-phosphoryl)serine. Positions 1588-1604 are enriched in polar residues; the sequence is QMSGSRPTESGDPTSQV. Positions 1588–1616 are disordered; sequence QMSGSRPTESGDPTSQVVEPAAAEVSVHA.

Pantetheine 4'-phosphate serves as cofactor.

Its pathway is lipid metabolism; fatty acid biosynthesis. In terms of biological role, may play a role in phthiocerol biosynthesis. This chain is Putative inactive phenolphthiocerol synthesis polyketide synthase type I Pks1 (pks1), found in Mycobacterium tuberculosis (strain ATCC 25618 / H37Rv).